Consider the following 124-residue polypeptide: Aspartate 1-decarboxylase (124 aa).

S21 acts as the Schiff-base intermediate with substrate; via pyruvic acid in catalysis. S21 bears the Pyruvic acid (Ser) mark. Residue T53 coordinates substrate. Y54 serves as the catalytic Proton donor. Residue 69-71 (GAA) participates in substrate binding.

This sequence belongs to the PanD family. Heterooctamer of four alpha and four beta subunits. Pyruvate serves as cofactor. Is synthesized initially as an inactive proenzyme, which is activated by self-cleavage at a specific serine bond to produce a beta-subunit with a hydroxyl group at its C-terminus and an alpha-subunit with a pyruvoyl group at its N-terminus.

It localises to the cytoplasm. The catalysed reaction is L-aspartate + H(+) = beta-alanine + CO2. Its pathway is cofactor biosynthesis; (R)-pantothenate biosynthesis; beta-alanine from L-aspartate: step 1/1. In terms of biological role, catalyzes the pyruvoyl-dependent decarboxylation of aspartate to produce beta-alanine. This Dehalococcoides mccartyi (strain CBDB1) protein is Aspartate 1-decarboxylase.